A 238-amino-acid chain; its full sequence is MEPYEAQKMMAEIRGSKETAAQPLPLYDTPYEPEDEGASPEGEGTPWPRESRLPEDDERPPEEYDQPWEWKKERISKAFAAQFEGSENCLSPGREEKGRLPPRLSAGNPKSAKPLGMEPSSPLGEWTDPALPLENQVWYHGAISRTDAENLLRLCKEASYLVRNSETSKNDFSLSLKSSQGFMHMKLSRTKEHKYVLGQNSPPFSSVPEIVHHYASRKLPIKGAEHMSLLYPVAIRTL.

2 disordered regions span residues 1–70 and 85–121; these read MEPY…PWEW and GSEN…EPSS. Ser39 carries the post-translational modification Phosphoserine. Over residues 55–66 the composition is skewed to acidic residues; it reads EDDERPPEEYDQ. A Phosphotyrosine modification is found at Tyr64. The SH2 domain occupies 138–233; the sequence is WYHGAISRTD…AEHMSLLYPV (96 aa).

As to quaternary structure, interacts with phosphorylated 'Tyr-720' of PDGFRA via its SH2 domain. May become phosphorylated upon binding to PDGFRA.

Adapter protein which may play a role in the regulation of apoptosis in response to PDGF. The protein is SH2 domain-containing adapter protein F of Mus musculus (Mouse).